A 202-amino-acid chain; its full sequence is MMIVLMLLLAYIVGSFPSGVIIGKIFFKKDIRQFGSGNTGATNSFRVLGRPAGFVVTFLDIFKGFIVVFFPLLFPVHPTGPISEFFTNGLIVGVFAILGHVYPIFLKFHGGKAVATSAGVVLGVAPILLLILAAIFFLTLYLTKYVSLSSIVAAICCVIGSLIIHDYILLVVSIIVAILLIFRHRTNIVRIFKGEEPKIKWM.

6 helical membrane-spanning segments follow: residues 2–22 (MIVL…GVII), 54–74 (FVVT…PLLF), 85–105 (FFTN…YPIF), 118–138 (AGVV…IFFL), 140–160 (LYLT…CVIG), and 162–182 (LIIH…LLIF).

Belongs to the PlsY family. Probably interacts with PlsX.

The protein localises to the cell membrane. It carries out the reaction an acyl phosphate + sn-glycerol 3-phosphate = a 1-acyl-sn-glycero-3-phosphate + phosphate. It functions in the pathway lipid metabolism; phospholipid metabolism. Catalyzes the transfer of an acyl group from acyl-phosphate (acyl-PO(4)) to glycerol-3-phosphate (G3P) to form lysophosphatidic acid (LPA). This enzyme utilizes acyl-phosphate as fatty acyl donor, but not acyl-CoA or acyl-ACP. In Staphylococcus carnosus (strain TM300), this protein is Glycerol-3-phosphate acyltransferase.